The following is a 728-amino-acid chain: METTTTERRRLFATEKVGGRAVYRLQAATVAAGILLVLYYRATRVPAAGEGRAAWLGMAAAELWFAVYWVITQSVRWCPVRRRTFKNRLAERYKENLPGVDVFVCTADPHAEPPSLVISTILSVMAYNYPSEKISVYLSDDGGSILTFYALWEASMFAKKWLPFCRRYNIEPRSPAAYFSESEGHHNLCSPKEWSFIKNLYEEMRERIDSAVMSGKIPEEIKLKHKGFDEWNSEMTSKNHQPIVQVLIDGKSQNAVDDDGNVLPTLVYMAREKSPQYHHNFKAGALNALIRVSALISDSPVILNVDCDMYSNNSDSIRDALCFFLDEEMSHKIGFVQYPQNYNNMTKNNIYGNSLNVINHVEMRGLDSAGGCLYIGTGCFHRREILCGKKFSKDYKEDWGRGIKERGHENIDEIEEKAKSLATCTYELRTQWGNEIGVKYGCPVEDVITGLAIHCRGWESVYMEPQRAAFVGVAPATLAQTILQHKRWSEGNFTIFLSKHNTFLFGHGKISLQLQMGYCIYGLWAANSLPTIYYVMIPALGLVKGTPLFPEIMSPWATPFIYVFCVKTLYSLYEALLSGDTLKGWWNGQRMWMVKRITSYLYGFIDTIRKLLGLSKMSFEITAKVSDGDEAKRYEQEILEFGSSSPEFVIIATVALLNFVCLVAGLSKIMAGVWNVFLPQVILCGLIVITNIPIYEAMFVRKDKGRIPLPVTLASIGFVMLAFLLPIV.

The next 2 membrane-spanning stretches (helical) occupy residues 21-43 and 53-73; these read AVYRLQAATVAAGILLVLYYRAT and AAWLGMAAAELWFAVYWVITQ. Catalysis depends on residues Asp-141 and Asp-446. The next 5 helical transmembrane spans lie at 523 to 543, 546 to 566, 646 to 666, 669 to 689, and 707 to 727; these read LWAANSLPTIYYVMIPALGLV, TPLFPEIMSPWATPFIYVFCV, PEFVIIATVALLNFVCLVAGL, IMAGVWNVFLPQVILCGLIVI, and IPLPVTLASIGFVMLAFLLPI.

This sequence belongs to the glycosyltransferase 2 family. Plant cellulose synthase-like E subfamily.

The protein localises to the golgi apparatus membrane. Its function is as follows. Thought to be a Golgi-localized beta-glycan synthase that polymerize the backbones of noncellulosic polysaccharides (hemicelluloses) of plant cell wall. This Oryza sativa subsp. japonica (Rice) protein is Cellulose synthase-like protein E6 (CSLE6).